Reading from the N-terminus, the 454-residue chain is Bifunctional protein GlmU (454 aa).

Residues 1–226 (MSLEIVILAA…AMEVQGVNDR (226 aa)) form a pyrophosphorylase region. UDP-N-acetyl-alpha-D-glucosamine-binding positions include 8-11 (LAAG), Lys22, Gln73, 78-79 (GT), 99-101 (YGD), Gly136, Glu151, Asn166, and Asn224. Asp101 is a Mg(2+) binding site. Asn224 provides a ligand contact to Mg(2+). The interval 227 to 247 (MQQAQLERHYQRLRAEELMRQ) is linker. The N-acetyltransferase stretch occupies residues 248 to 454 (GVTLLDPQRL…NWKRPEKIKK (207 aa)). UDP-N-acetyl-alpha-D-glucosamine contacts are provided by Arg330 and Lys348. Catalysis depends on His360, which acts as the Proton acceptor. The UDP-N-acetyl-alpha-D-glucosamine site is built by Tyr363 and Asn374. Acetyl-CoA contacts are provided by residues Ala377, 383 to 384 (NY), Ser402, Ala420, and Arg437.

The protein in the N-terminal section; belongs to the N-acetylglucosamine-1-phosphate uridyltransferase family. This sequence in the C-terminal section; belongs to the transferase hexapeptide repeat family. As to quaternary structure, homotrimer. Mg(2+) is required as a cofactor.

It is found in the cytoplasm. It catalyses the reaction alpha-D-glucosamine 1-phosphate + acetyl-CoA = N-acetyl-alpha-D-glucosamine 1-phosphate + CoA + H(+). It carries out the reaction N-acetyl-alpha-D-glucosamine 1-phosphate + UTP + H(+) = UDP-N-acetyl-alpha-D-glucosamine + diphosphate. The protein operates within nucleotide-sugar biosynthesis; UDP-N-acetyl-alpha-D-glucosamine biosynthesis; N-acetyl-alpha-D-glucosamine 1-phosphate from alpha-D-glucosamine 6-phosphate (route II): step 2/2. Its pathway is nucleotide-sugar biosynthesis; UDP-N-acetyl-alpha-D-glucosamine biosynthesis; UDP-N-acetyl-alpha-D-glucosamine from N-acetyl-alpha-D-glucosamine 1-phosphate: step 1/1. It functions in the pathway bacterial outer membrane biogenesis; LPS lipid A biosynthesis. In terms of biological role, catalyzes the last two sequential reactions in the de novo biosynthetic pathway for UDP-N-acetylglucosamine (UDP-GlcNAc). The C-terminal domain catalyzes the transfer of acetyl group from acetyl coenzyme A to glucosamine-1-phosphate (GlcN-1-P) to produce N-acetylglucosamine-1-phosphate (GlcNAc-1-P), which is converted into UDP-GlcNAc by the transfer of uridine 5-monophosphate (from uridine 5-triphosphate), a reaction catalyzed by the N-terminal domain. The chain is Bifunctional protein GlmU from Pseudomonas aeruginosa (strain LESB58).